Here is a 312-residue protein sequence, read N- to C-terminus: MAQQGQGSMDPAALDDIIRRLLDYRNPKPGTKQAMLNESEIRQLCIVSREIFLQQPNLLELEAPIKICGDIHGQYSDLLRLFEYGGFPPTANYLFLGDYVDRGKQSLETICLLLAYKIKYPENFFLLRGNHECASINRIYGFYDECKRRFSVRLWKVFTDSFNCLPVAAVIDDKILCMHGGLSPDLTNVEQIKNIKRPTDVPDSGLLCDLLWSDPSKDVKGWGMNDRGVSYTFGPDKVAEFLIKNDMDLICRAHQVVEDGYEFFADRQLVTIFSAPNYCGEFDNAGAMMSVDESLMCSFQILKPADRKPRFL.

Alanine 2 is subject to N-acetylalanine. The Mn(2+) site is built by aspartate 70, histidine 72, aspartate 98, and asparagine 130. Residue histidine 131 is the Proton donor of the active site. The Mn(2+) site is built by histidine 179 and histidine 254.

Belongs to the PPP phosphatase family. PP-1 subfamily. In terms of assembly, interacts with SRK2D/SNRK2.2 and SRK2E/SNRK2.6. Mn(2+) is required as a cofactor.

Its subcellular location is the nucleus. It is found in the cytoplasm. It carries out the reaction O-phospho-L-seryl-[protein] + H2O = L-seryl-[protein] + phosphate. The catalysed reaction is O-phospho-L-threonyl-[protein] + H2O = L-threonyl-[protein] + phosphate. Its activity is regulated as follows. Phosphatase activity is strongly reduced by the protein phosphatase inhibitor 2 (I-2). Serine/threonine-protein phosphatase that possesses phosphatase activity toward para-nitrophenyl phosphate (pNPP) in vitro. The chain is Serine/threonine-protein phosphatase PP1 isozyme 2 from Arabidopsis thaliana (Mouse-ear cress).